The chain runs to 347 residues: Ribosomal RNA small subunit methyltransferase C (347 aa).

This sequence belongs to the methyltransferase superfamily. RsmC family. Monomer.

The protein localises to the cytoplasm. The catalysed reaction is guanosine(1207) in 16S rRNA + S-adenosyl-L-methionine = N(2)-methylguanosine(1207) in 16S rRNA + S-adenosyl-L-homocysteine + H(+). Its function is as follows. Specifically methylates the guanine in position 1207 of 16S rRNA in the 30S particle. The chain is Ribosomal RNA small subunit methyltransferase C from Yersinia pseudotuberculosis serotype O:1b (strain IP 31758).